A 409-amino-acid chain; its full sequence is FBD-associated F-box protein At4g10400 (409 aa).

One can recognise an F-box domain in the interval 1-47; sequence MDRISGLPDEVLVKILSFVPTKVAVSTSILSKRWEFLWMWLTKLKFG. The FBD domain occupies 330–379; that stretch reads SWNQPSIVPECMLSSLQKFTWFKYLGRPQDRDIAVYILKNACRLRTATIK.

In Arabidopsis thaliana (Mouse-ear cress), this protein is FBD-associated F-box protein At4g10400.